The sequence spans 237 residues: 2,3-bisphosphoglycerate-dependent phosphoglycerate mutase (237 aa).

Residues 10-17 (RHGESKWN), 23-24 (TG), R62, 89-92 (ERHY), K100, 116-117 (RR), and 185-186 (GN) each bind substrate. H11 serves as the catalytic Tele-phosphohistidine intermediate. The active-site Proton donor/acceptor is E89.

This sequence belongs to the phosphoglycerate mutase family. BPG-dependent PGAM subfamily. As to quaternary structure, homodimer.

The enzyme catalyses (2R)-2-phosphoglycerate = (2R)-3-phosphoglycerate. Its pathway is carbohydrate degradation; glycolysis; pyruvate from D-glyceraldehyde 3-phosphate: step 3/5. In terms of biological role, catalyzes the interconversion of 2-phosphoglycerate and 3-phosphoglycerate. This is 2,3-bisphosphoglycerate-dependent phosphoglycerate mutase from Baumannia cicadellinicola subsp. Homalodisca coagulata.